A 121-amino-acid chain; its full sequence is Ribosome-binding factor A (121 aa).

Belongs to the RbfA family. As to quaternary structure, monomer. Binds 30S ribosomal subunits, but not 50S ribosomal subunits or 70S ribosomes.

The protein localises to the cytoplasm. Its function is as follows. One of several proteins that assist in the late maturation steps of the functional core of the 30S ribosomal subunit. Associates with free 30S ribosomal subunits (but not with 30S subunits that are part of 70S ribosomes or polysomes). Required for efficient processing of 16S rRNA. May interact with the 5'-terminal helix region of 16S rRNA. The chain is Ribosome-binding factor A from Clostridium novyi (strain NT).